Reading from the N-terminus, the 80-residue chain is Putative membrane protein insertion efficiency factor (80 aa).

The protein belongs to the UPF0161 family.

Its subcellular location is the cell membrane. Its function is as follows. Could be involved in insertion of integral membrane proteins into the membrane. This chain is Putative membrane protein insertion efficiency factor, found in Corynebacterium jeikeium (strain K411).